A 248-amino-acid polypeptide reads, in one-letter code: ATP synthase subunit a, chloroplastic (248 aa).

4 helical membrane passes run Val96–Leu116, Ile135–Tyr155, Leu200–Leu220, and Gly221–Gly241.

It belongs to the ATPase A chain family. F-type ATPases have 2 components, CF(1) - the catalytic core - and CF(0) - the membrane proton channel. CF(1) has five subunits: alpha(3), beta(3), gamma(1), delta(1), epsilon(1). CF(0) has four main subunits: a, b, b' and c.

The protein resides in the plastid. It is found in the chloroplast thylakoid membrane. Key component of the proton channel; it plays a direct role in the translocation of protons across the membrane. The sequence is that of ATP synthase subunit a, chloroplastic from Adiantum capillus-veneris (Maidenhair fern).